Reading from the N-terminus, the 404-residue chain is Zinc finger CCCH domain-containing protein 3 (404 aa).

5 consecutive C3H1-type zinc fingers follow at residues 47–75, 90–118, 135–163, 261–289, and 307–335; these read RPGERDCQFYLRTGLCGYGSSCRYNHPTH, RIGQPDCEYFLKTGACKYGPTCKYHHPKD, RLGEKPCPYYLRTGTCRFGVACKFHHPQP, SSDQPECRFFMNTGTCKYGDDCKYSHPGV, and RPGQPACGNFRSYGFCKFGPNCKFDHPML. A compositionally biased stretch (polar residues) spans 350–374; the sequence is FASPVTTHQRISPTPNRSDSKSLSN. Residues 350 to 404 form a disordered region; the sequence is FASPVTTHQRISPTPNRSDSKSLSNGKPDVKKESSETEKPDNGEVQDLSEDASSP. Residues 377–391 are compositionally biased toward basic and acidic residues; it reads PDVKKESSETEKPDN.

It is found in the nucleus. In terms of biological role, possesses RNA-binding and ribonuclease activities in vitro. The protein is Zinc finger CCCH domain-containing protein 3 of Arabidopsis thaliana (Mouse-ear cress).